Reading from the N-terminus, the 331-residue chain is Probable allantoicase (331 aa).

The protein belongs to the allantoicase family.

It carries out the reaction allantoate + H2O = (S)-ureidoglycolate + urea. Its pathway is nitrogen metabolism; (S)-allantoin degradation; (S)-ureidoglycolate from allantoate (aminidohydrolase route): step 1/1. The chain is Probable allantoicase from Pseudomonas fluorescens (strain ATCC BAA-477 / NRRL B-23932 / Pf-5).